The sequence spans 304 residues: Probable UDP-3-O-acylglucosamine N-acyltransferase 2, mitochondrial (304 aa).

A mitochondrion-targeting transit peptide spans 1–47; sequence MAATLWRLYSKSICNSLQGIILNKPFIQKQLLLSSRTRSLSFSSDSQ. A UDP-N-acetyl-alpha-D-glucosamine-binding site is contributed by 159–161; it reads FGF. Residues D209 and Q213 each contribute to the hexadecanoate site. H216 serves as the catalytic Proton acceptor. Residues N217, S235, and H253 each coordinate UDP-N-acetyl-alpha-D-glucosamine.

It belongs to the transferase hexapeptide repeat family. LpxD subfamily. In terms of assembly, homotrimer.

The protein resides in the mitochondrion. The catalysed reaction is a UDP-3-O-[(3R)-3-hydroxyacyl]-alpha-D-glucosamine + a (3R)-hydroxyacyl-[ACP] = a UDP-2-N,3-O-bis[(3R)-3-hydroxyacyl]-alpha-D-glucosamine + holo-[ACP] + H(+). The protein operates within glycolipid biosynthesis; lipid IV(A) biosynthesis; lipid IV(A) from (3R)-3-hydroxytetradecanoyl-[acyl-carrier-protein] and UDP-N-acetyl-alpha-D-glucosamine: step 3/6. Functionally, involved in the biosynthesis of lipid A, a phosphorylated glycolipid that in bacteria anchors the lipopolysaccharide to the outer membrane of the cell. Lipid A-like molecules in plants may serve as structural components of the outer membranes of mitochondria and/or chloroplasts, or may be involved in signal transduction or plant defense responses. The polypeptide is Probable UDP-3-O-acylglucosamine N-acyltransferase 2, mitochondrial (LPXD2) (Arabidopsis thaliana (Mouse-ear cress)).